We begin with the raw amino-acid sequence, 236 residues long: Small ribosomal subunit protein uS3 (236 aa).

In terms of domain architecture, KH type-2 spans 39–107 (IREILHKELK…DVVINIVEIR (69 aa)). The interval 213–236 (MAQDKRMNEGGGESPSPRSRRDAA) is disordered.

This sequence belongs to the universal ribosomal protein uS3 family. As to quaternary structure, part of the 30S ribosomal subunit. Forms a tight complex with proteins S10 and S14.

Functionally, binds the lower part of the 30S subunit head. Binds mRNA in the 70S ribosome, positioning it for translation. This is Small ribosomal subunit protein uS3 from Bradyrhizobium sp. (strain ORS 278).